Consider the following 291-residue polypeptide: Bifunctional protein FolD (291 aa).

NADP(+)-binding positions include 167 to 169 (GRS) and Ser-192.

The protein belongs to the tetrahydrofolate dehydrogenase/cyclohydrolase family. Homodimer.

The catalysed reaction is (6R)-5,10-methylene-5,6,7,8-tetrahydrofolate + NADP(+) = (6R)-5,10-methenyltetrahydrofolate + NADPH. The enzyme catalyses (6R)-5,10-methenyltetrahydrofolate + H2O = (6R)-10-formyltetrahydrofolate + H(+). It participates in one-carbon metabolism; tetrahydrofolate interconversion. Functionally, catalyzes the oxidation of 5,10-methylenetetrahydrofolate to 5,10-methenyltetrahydrofolate and then the hydrolysis of 5,10-methenyltetrahydrofolate to 10-formyltetrahydrofolate. The protein is Bifunctional protein FolD of Leptospira biflexa serovar Patoc (strain Patoc 1 / Ames).